A 601-amino-acid chain; its full sequence is Glutamine--fructose-6-phosphate aminotransferase [isomerizing] (601 aa).

Cys2 acts as the Nucleophile; for GATase activity in catalysis. The Glutamine amidotransferase type-2 domain occupies 2 to 218 (CGIVGYIGYD…DHEIVIVKKD (217 aa)). 2 SIS domains span residues 284-423 (IIND…EHGR) and 453-591 (IATD…VDKP). Lys596 (for Fru-6P isomerization activity) is an active-site residue.

Homodimer.

The protein resides in the cytoplasm. It catalyses the reaction D-fructose 6-phosphate + L-glutamine = D-glucosamine 6-phosphate + L-glutamate. Its function is as follows. Catalyzes the first step in hexosamine metabolism, converting fructose-6P into glucosamine-6P using glutamine as a nitrogen source. The chain is Glutamine--fructose-6-phosphate aminotransferase [isomerizing] from Staphylococcus aureus (strain COL).